A 102-amino-acid chain; its full sequence is UPF0473 protein SERP1179 (102 aa).

It belongs to the UPF0473 family.

The protein is UPF0473 protein SERP1179 of Staphylococcus epidermidis (strain ATCC 35984 / DSM 28319 / BCRC 17069 / CCUG 31568 / BM 3577 / RP62A).